The primary structure comprises 873 residues: V-type proton ATPase 116 kDa subunit a 2 (873 aa).

The Cytoplasmic segment spans residues 1 to 407 (MGSLSRSEEM…TIITFPFLFS (407 aa)). Residues 408–428 (CMFGDLGHGCIMLMAGLWFVL) form a helical membrane-spanning segment. Over 429–445 (REKNLQARNIKDEIFNM) the chain is Lumenal. Residues 446 to 466 (FFGGRYIILLMGLFSIHAGII) form a helical membrane-spanning segment. The Cytoplasmic portion of the chain corresponds to 467 to 543 (YNDMFAKSFN…NKLNFLNSMK (77 aa)). A helical membrane pass occupies residues 544 to 564 (MKLSVILGISQMTFGVILSFF). Asn565 and Asn569 each carry an N-linked (GlcNAc...) asparagine glycan. The Lumenal segment spans residues 565–574 (NHTYNKSKID). Residues 575 to 595 (IFTVFIPQMLFMGCIFMYLCL) traverse the membrane as a helical segment. At 596-614 (QIILKWLFFWTKEATVFGQ) the chain is on the cytoplasmic side. The helical transmembrane segment at 615 to 635 (IYPGSHCAPSLLIGLINMFMM) threads the bilayer. The Lumenal portion of the chain corresponds to 636–668 (KDRNAGFVVDGGKVNGEYREVETCYLSQWYPGQ). The helical transmembrane segment at 669-689 (SVIEMILVVIAVICVPVMLFG) threads the bilayer. Residues 690–785 (KPIHHVMQQK…LWALSLAHAQ (96 aa)) lie on the Cytoplasmic side of the membrane. Residues 786 to 806 (LSEVLWHMVFVTGGLGISGTA) form a helical membrane-spanning segment. Residue Gly807 is a topological domain, lumenal. The helical transmembrane segment at 808–828 (FIAVYVVFFIFFVLTISILVL) threads the bilayer. The Cytoplasmic segment spans residues 829–873 (MEGLSAFLHTLRLHWVEFQSKFYLGLGYPFVPYSFKTALQEAEAA).

This sequence belongs to the V-ATPase 116 kDa subunit family. V-ATPase is a heteromultimeric enzyme made up of two complexes: the ATP-hydrolytic V1 complex and the proton translocation V0 complex. The V1 complex consists of three catalytic AB heterodimers that form a heterohexamer, three peripheral stalks each consisting of EG heterodimers, one central rotor including subunits D and F, and the regulatory subunits C and H. The proton translocation complex V0 consists of the proton transport subunit a, a ring of proteolipid subunits c9c'', rotary subunit d, subunits e and f, and the accessory subunits vah-19/Ac45 and vah-20/PRR. Interacts with V-type proton ATPase subunit C vha-11. Expressed in the H-shaped excretory cell (at protein level). Expressed in hypodermal cells around the vulva. Expressed in the main epidermal syncytium. Expressed in the sheath cells associated with head and tail sensory organs; specifically, expressed in the apical sheath cells of the amphids and CEP neuron and in the sheath cells of the OLQ sensory organ.

It is found in the apical cell membrane. The protein localises to the endosome. Its subcellular location is the multivesicular body membrane. Subunit of the V0 complex of vacuolar(H+)-ATPase (V-ATPase), a multisubunit enzyme composed of a peripheral complex (V1) that hydrolyzes ATP and a membrane integral complex (V0) that translocates protons. V-ATPase is responsible for acidifying and maintaining the pH of intracellular compartments and in some cell types, is targeted to the plasma membrane, where it is responsible for acidifying the extracellular environment. Involved in the assembly of the V-ATPase complex. The V-ATPase is required for the function of the excretory canal. Independently of the V1 complex, the V0 complex of the V-ATPase is required for multivesicular body membrane fusion with the apical membrane of the epidermal cells during exosome release and thus regulates the release of cuticle components such as Hedgehog-related peptide wrt-2 but not collagen. Also, in the epidermis, regulates the trafficking of che-14 and rdy-2. Regulates the secretion of granular material found in the amphid channel and in controlling osmoregulation in the amphid pocket. The chain is V-type proton ATPase 116 kDa subunit a 2 from Caenorhabditis elegans.